The primary structure comprises 265 residues: Hydroxyethylthiazole kinase (265 aa).

Met50 is a substrate binding site. Arg125 and Thr171 together coordinate ATP. Residue Gly198 participates in substrate binding.

Belongs to the Thz kinase family. Mg(2+) serves as cofactor.

It carries out the reaction 5-(2-hydroxyethyl)-4-methylthiazole + ATP = 4-methyl-5-(2-phosphooxyethyl)-thiazole + ADP + H(+). The protein operates within cofactor biosynthesis; thiamine diphosphate biosynthesis; 4-methyl-5-(2-phosphoethyl)-thiazole from 5-(2-hydroxyethyl)-4-methylthiazole: step 1/1. Functionally, catalyzes the phosphorylation of the hydroxyl group of 4-methyl-5-beta-hydroxyethylthiazole (THZ). The sequence is that of Hydroxyethylthiazole kinase from Salmonella schwarzengrund (strain CVM19633).